Consider the following 897-residue polypeptide: Cytokine receptor common subunit beta (897 aa).

A signal peptide spans M1–C16. The Extracellular portion of the chain corresponds to W17 to W443. Residues C35 and C45 are joined by a disulfide bond. A glycan (N-linked (GlcNAc...) asparagine) is linked at N58. 2 cysteine pairs are disulfide-bonded: C75–C96 and C86–C91. Residues P133–G240 form the Fibronectin type-III 1 domain. N191 carries N-linked (GlcNAc...) asparagine glycosylation. Cystine bridges form between C250–C260 and C289–C306. The Fibronectin type-III 2 domain maps to Q339–T436. A glycan (N-linked (GlcNAc...) asparagine) is linked at N346. The short motif at W425 to S429 is the WSXWS motif element. The chain crosses the membrane as a helical span at residues V444–L460. Topologically, residues R461 to C897 are cytoplasmic. The Box 1 motif signature appears at W474 to S482. 4 disordered regions span residues G498–R517, S532–C630, P648–G812, and P830–K849. The segment covering E564–P574 has biased composition (pro residues). The span at S723 to P752 shows a compositional bias: low complexity. At Y766 the chain carries Phosphotyrosine. The segment covering P830–S840 has biased composition (low complexity).

Belongs to the type I cytokine receptor family. Type 4 subfamily. As to quaternary structure, heterodimer of an alpha and a beta subunit. The beta subunit is common to the IL3, IL5 and GM-CSF receptors. The signaling GM-CSF receptor complex is a dodecamer of two head-to-head hexamers of two alpha, two beta, and two ligand subunits. Interacts with TMEM102; this interaction occurs preferentially in the absence of CSF2. Interacts with FCER1G; this interaction is direct. Interacts with LYN. Interacts with JAK1. Post-translationally, may be phosphorylated by LYN.

Its subcellular location is the membrane. Functionally, cell surface receptor that plays a role in immune response and controls the production and differentiation of hematopoietic progenitor cells into lineage-restricted cells. Acts by forming an heterodimeric receptor through interaction with different partners such as IL3RA, IL5RA or CSF2RA. In turn, participates in various signaling pathways including interleukin-3, interleukin-5 and granulocyte-macrophage colony-stimulating factor/CSF2 pathways. In unstimulated conditions, interacts constitutively with JAK1 and ligand binding leads to JAK1 stimulation and subsequent activation of the JAK-STAT pathway. The protein is Cytokine receptor common subunit beta (CSF2RB) of Homo sapiens (Human).